Reading from the N-terminus, the 1073-residue chain is Envelopment polyprotein (1073 aa).

The first 19 residues, 1–19, serve as a signal peptide directing secretion; sequence MMKVIWFSSLICFVIQCSG. At 20-453 the chain is on the lumenal side; the sequence is DSGPIICAGP…NPQCYPAKKW (434 aa). Cys26 and Cys49 are joined by a disulfide. N-linked (GlcNAc...) asparagine; by host glycosylation is found at Asn33 and Asn63. Intrachain disulfides connect Cys143–Cys156, Cys180–Cys327, Cys206–Cys216, Cys258–Cys305, Cys266–Cys303, Cys274–Cys280, Cys287–Cys292, Cys349–Cys352, Cys356–Cys424, and Cys376–Cys381. The chain crosses the membrane as a helical span at residues 454 to 474; the sequence is LFIIIVILLGYAGLMLLTNVL. Residues 475 to 521 form a golgi retention signal region; the sequence is KAIGIWGSWVIAPVKLMFAIIKKLMRTVSCLMRKLMDRGRQVIHEEI. Topologically, residues 475–535 are cytoplasmic; sequence KAIGIWGSWV…EGNQDDVRIE (61 aa). An internal signal sequence for glycoprotein C region spans residues 536-562; sequence MARPRRVRHWMYSPVILTILAIGLAES. Intrachain disulfides connect Cys563-Cys604, Cys576-Cys586, Cys629-Cys725, Cys644-Cys841, Cys650-Cys698, Cys656-Cys705, Cys660-Cys687, Cys691-Cys696, Cys778-Cys793, and Cys809-Cys823. Over 563-1036 the chain is Lumenal; it reads CDEMVHADSK…ALFGNGLSRW (474 aa). A fusion loop region spans residues 650-656; sequence CRWAGDC. The interval 691–705 is fusion loop; it reads CGGAACGCFNAAPSC. 2 N-linked (GlcNAc...) asparagine; by host glycosylation sites follow: Asn853 and Asn914. 3 cysteine pairs are disulfide-bonded: Cys908/Cys978, Cys918/Cys921, and Cys943/Cys974. Asn936 carries N-linked (GlcNAc...) asparagine; by host glycosylation. Residues 1037 to 1057 traverse the membrane as a helical segment; sequence ILGVIGVLLGGLALFFMIMSL. The Cytoplasmic segment spans residues 1058–1073; sequence FKLGTKQVFRSRTKLA.

It belongs to the phlebovirus envelope glycoprotein family. Homodimer. Heterodimer with glycoprotein C. Homotrimer (postfusion). In terms of assembly, heterodimer with glycoprotein N. In terms of processing, specific enzymatic cleavages in vivo yield mature proteins including glycoprotein C and glycoprotein N. The cytoplasmic tail is Palmitoylated. Post-translationally, glycosylated. In terms of processing, palmitoylated.

It is found in the virion membrane. The protein localises to the host Golgi apparatus membrane. Its subcellular location is the host endoplasmic reticulum membrane. In terms of biological role, structural component of the virion that interacts with glycoprotein C. It shields the hydrophobic fusion loops of the glycoprotein C, preventing premature fusion. The glycoprotein protrusions are arranged on an icosahedral lattice, with T=12 triangulation. They are able to attach the virion to the host cell receptor CD209/DC-SIGN and to promote fusion of membranes with the late endosome after clathrin-mediated endocytosis of the virion. Plays a role in the packaging of ribonucleoproteins during virus assembly. Structural component of the virion that interacts with glycoprotein N. Acts as a class II fusion protein that is activated upon acidification and subsequent repositioning of the glycoprotein N. The glycoprotein protrusions are arranged on an icosahedral lattice, with T=12 triangulation. They are able to attach the virion to the host cell receptor CD209/DC-SIGN and to promote fusion of membranes with the late endosome after clathrin-mediated endocytosis of the virion. The chain is Envelopment polyprotein from Dabie bandavirus (Severe fever with thrombocytopenia virus).